The sequence spans 430 residues: Probable aspartic-type endopeptidase ARB_07403 (430 aa).

A signal peptide spans 1–17 (MHVSTLLVAVLLPLALS). Positions 18–87 (KPTPRKKTGS…SKATAGSGKE (70 aa)) are cleaved as a propeptide — activation peptide. The tract at residues 66–105 (YHPQHISKLPGNSKATAGSGKEGVESQDEKGEVVNNPTNH) is disordered. Over residues 87-97 (EGVESQDEKGE) the composition is skewed to basic and acidic residues. The Peptidase A1 domain occupies 109-427 (FLSPVTIGGQ…DQRGPSISLA (319 aa)). D125 is a catalytic residue. N-linked (GlcNAc...) asparagine glycosylation is present at N306. The active site involves D314.

It belongs to the peptidase A1 family.

It localises to the secreted. Its function is as follows. Probable secreted aspartic-type endopeptidase which contributes to virulence. The chain is Probable aspartic-type endopeptidase ARB_07403 from Arthroderma benhamiae (strain ATCC MYA-4681 / CBS 112371) (Trichophyton mentagrophytes).